The following is a 455-amino-acid chain: Tubulin alpha chain (455 aa).

GTP contacts are provided by Gln11, Glu77, Ser145, Gly149, Thr150, Ser184, Asn211, and Asn233. Glu77 serves as a coordination point for Mg(2+). Glu259 is a catalytic residue.

It belongs to the tubulin family. As to quaternary structure, dimer of alpha and beta chains. A typical microtubule is a hollow water-filled tube with an outer diameter of 25 nm and an inner diameter of 15 nM. Alpha-beta heterodimers associate head-to-tail to form protofilaments running lengthwise along the microtubule wall with the beta-tubulin subunit facing the microtubule plus end conferring a structural polarity. Microtubules usually have 13 protofilaments but different protofilament numbers can be found in some organisms and specialized cells. The cofactor is Mg(2+).

It is found in the cytoplasm. The protein resides in the cytoskeleton. It carries out the reaction GTP + H2O = GDP + phosphate + H(+). Its function is as follows. Tubulin is the major constituent of microtubules, a cylinder consisting of laterally associated linear protofilaments composed of alpha- and beta-tubulin heterodimers. Microtubules grow by the addition of GTP-tubulin dimers to the microtubule end, where a stabilizing cap forms. Below the cap, tubulin dimers are in GDP-bound state, owing to GTPase activity of alpha-tubulin. The chain is Tubulin alpha chain from Entamoeba histolytica (strain ATCC 30459 / HM-1:IMSS / ABRM).